We begin with the raw amino-acid sequence, 43 residues long: Venom protein E2 (43 aa).

Intrachain disulfides connect Cys-3–Cys-20 and Cys-14–Cys-39.

In terms of tissue distribution, expressed by the venom gland.

It localises to the secreted. Neurotoxin. Blocks muscular nicotinic acetylcholine receptors (nAChR). The sequence is that of Venom protein E2 from Micrurus pyrrhocryptus (Coral snake).